A 212-amino-acid chain; its full sequence is Thymidylate kinase (212 aa).

Glycine 11 to threonine 18 is a binding site for ATP.

It belongs to the thymidylate kinase family.

The enzyme catalyses dTMP + ATP = dTDP + ADP. Functionally, phosphorylation of dTMP to form dTDP in both de novo and salvage pathways of dTTP synthesis. The sequence is that of Thymidylate kinase from Streptococcus pneumoniae serotype 19F (strain G54).